Consider the following 250-residue polypeptide: GTP cyclohydrolase 1 (250 aa).

Composition is skewed to basic and acidic residues over residues 1-14 (MEKG…EKPR) and 35-44 (PAEKPPRPEA). A disordered region spans residues 1–64 (MEKGPVRAPA…GERPRSEEDN (64 aa)). Residues Ser60 and Ser81 each carry the phosphoserine modification. Residues Cys141, His144, and Cys212 each coordinate Zn(2+).

Belongs to the GTP cyclohydrolase I family. Toroid-shaped homodecamer, composed of a dimer of pentamers. The inactive isoforms also form decamers and may possibly be incorporated into GCH1 heterodecamers, decreasing enzyme stability and activity. Interacts with AHSA1 and GCHFR/GFRP. Phosphorylated by casein kinase II at Ser-81 in HAECs during oscillatory shear stress; phosphorylation at Ser-81 results in increased enzyme activity. As to expression, in epidermis, expressed predominantly in basal undifferentiated keratinocytes and in some but not all melanocytes (at protein level).

The protein localises to the cytoplasm. It localises to the nucleus. It catalyses the reaction GTP + H2O = 7,8-dihydroneopterin 3'-triphosphate + formate + H(+). It functions in the pathway cofactor biosynthesis; 7,8-dihydroneopterin triphosphate biosynthesis; 7,8-dihydroneopterin triphosphate from GTP: step 1/1. GTP shows a positive allosteric effect, and tetrahydrobiopterin inhibits the enzyme activity. Zinc is required for catalytic activity. Inhibited by Mg(2+). Positively regulates nitric oxide synthesis in umbilical vein endothelial cells (HUVECs). May be involved in dopamine synthesis. May modify pain sensitivity and persistence. Isoform GCH-1 is the functional enzyme, the potential function of the enzymatically inactive isoforms remains unknown. This is GTP cyclohydrolase 1 (GCH1) from Homo sapiens (Human).